Here is a 337-residue protein sequence, read N- to C-terminus: Anaerobic sulfite reductase subunit C (337 aa).

[4Fe-4S] cluster is bound by residues Cys-115, Cys-121, Cys-153, Cys-157, Cys-180, Cys-183, Cys-186, Cys-190, Cys-212, Cys-215, Cys-218, and Cys-222. Residue Cys-157 participates in siroheme binding. 2 consecutive 4Fe-4S ferredoxin-type domains span residues 171 to 200 and 203 to 232; these read AKMR…CLAL and GKAV…RKPD.

The protein belongs to the nitrite and sulfite reductase 4Fe-4S domain family. The anaerobic sulfite reductase seems to consist of three subunits. [4Fe-4S] cluster is required as a cofactor. The cofactor is siroheme.

Its subcellular location is the cytoplasm. It carries out the reaction hydrogen sulfide + 3 NAD(+) + 3 H2O = sulfite + 3 NADH + 4 H(+). The protein operates within sulfur metabolism; sulfite reduction. In terms of biological role, this enzyme catalyzes the hydrogen sulfide production from sulfite. It is strictly anaerobic. It is regulated by electron acceptors rather than by cysteine. This Salmonella typhi protein is Anaerobic sulfite reductase subunit C (asrC).